The sequence spans 344 residues: Arginine N-succinyltransferase (344 aa).

Leu-125 is a succinyl-CoA binding site. Catalysis depends on His-229, which acts as the Proton donor.

The protein belongs to the arginine N-succinyltransferase family.

It carries out the reaction succinyl-CoA + L-arginine = N(2)-succinyl-L-arginine + CoA + H(+). It functions in the pathway amino-acid degradation; L-arginine degradation via AST pathway; L-glutamate and succinate from L-arginine: step 1/5. Functionally, catalyzes the transfer of succinyl-CoA to arginine to produce N(2)-succinylarginine. This is Arginine N-succinyltransferase from Escherichia coli (strain UTI89 / UPEC).